We begin with the raw amino-acid sequence, 92 residues long: Small integral membrane protein 12 (92 aa).

A helical membrane pass occupies residues Y15–F34.

It belongs to the SMIM12 family.

It is found in the membrane. In Mus musculus (Mouse), this protein is Small integral membrane protein 12 (Smim12).